Consider the following 593-residue polypeptide: Mitosis inducer protein kinase cdr1 (593 aa).

The 247-residue stretch at 12 to 258 folds into the Protein kinase domain; the sequence is WRLGKTLGTG…IPEVFSHPFL (247 aa). Residues 18–26 and Lys-41 contribute to the ATP site; that span reads LGTGSTSCV. The active-site Proton acceptor is Asp-128. Ser-550 is subject to Phosphoserine.

Belongs to the protein kinase superfamily. CAMK Ser/Thr protein kinase family. NIM1 subfamily. As to quaternary structure, interacts with msp1.

It carries out the reaction L-seryl-[protein] + ATP = O-phospho-L-seryl-[protein] + ADP + H(+). It catalyses the reaction L-threonyl-[protein] + ATP = O-phospho-L-threonyl-[protein] + ADP + H(+). This protein, a dose-dependent mitotic inducer, appears to function as a negative regulator of mitosis inhibitor wee1 by phosphorylating and inactivating it. This Schizosaccharomyces pombe (strain 972 / ATCC 24843) (Fission yeast) protein is Mitosis inducer protein kinase cdr1 (cdr1).